A 249-amino-acid polypeptide reads, in one-letter code: Electron transfer flavoprotein subunit beta (249 aa).

This sequence belongs to the ETF beta-subunit/FixA family. As to quaternary structure, heterodimer of an alpha and a beta subunit. FAD serves as cofactor. It depends on AMP as a cofactor.

In terms of biological role, the electron transfer flavoprotein serves as a specific electron acceptor for other dehydrogenases. It transfers the electrons to the main respiratory chain via ETF-ubiquinone oxidoreductase (ETF dehydrogenase). This chain is Electron transfer flavoprotein subunit beta (etfB), found in Pseudomonas aeruginosa (strain ATCC 15692 / DSM 22644 / CIP 104116 / JCM 14847 / LMG 12228 / 1C / PRS 101 / PAO1).